The following is a 145-amino-acid chain: MSRFLSNATNRIDAKGRVSVPSAFRSVLVQRNVQELYCFQDFVFPAISVGGPDLLERFERQIAAEDPFSPDANEMSLLIHGGGVFMKLDAEGRLMVTDFIRGFTGISDEVTFVGRADHFQLWQPQAFVAAQAQARGERKLAGKRS.

SpoVT-AbrB domains are found at residues 7 to 54 and 83 to 126; these read NATN…GPDL and GVFM…QPQA.

Belongs to the MraZ family. As to quaternary structure, forms oligomers.

The protein resides in the cytoplasm. Its subcellular location is the nucleoid. The chain is Transcriptional regulator MraZ from Rhizobium leguminosarum bv. trifolii (strain WSM2304).